The following is a 457-amino-acid chain: Siroheme synthase (457 aa).

The interval 1 to 204 is precorrin-2 dehydrogenase /sirohydrochlorin ferrochelatase; sequence MDHLPIFCQL…NDQKAITETT (204 aa). NAD(+) contacts are provided by residues 22–23 and 43–44; these read DV and LA. At serine 128 the chain carries Phosphoserine. The segment at 216-457 is uroporphyrinogen-III C-methyltransferase; the sequence is GEVVLVGAGP…RDKLNWFSNH (242 aa). Proline 225 contributes to the S-adenosyl-L-methionine binding site. The Proton acceptor role is filled by aspartate 248. Catalysis depends on lysine 270, which acts as the Proton donor. S-adenosyl-L-methionine-binding positions include 301–303, isoleucine 306, 331–332, methionine 382, and glycine 411; these read GGD and TA.

The protein in the N-terminal section; belongs to the precorrin-2 dehydrogenase / sirohydrochlorin ferrochelatase family. This sequence in the C-terminal section; belongs to the precorrin methyltransferase family.

It carries out the reaction uroporphyrinogen III + 2 S-adenosyl-L-methionine = precorrin-2 + 2 S-adenosyl-L-homocysteine + H(+). The catalysed reaction is precorrin-2 + NAD(+) = sirohydrochlorin + NADH + 2 H(+). It catalyses the reaction siroheme + 2 H(+) = sirohydrochlorin + Fe(2+). It functions in the pathway cofactor biosynthesis; adenosylcobalamin biosynthesis; precorrin-2 from uroporphyrinogen III: step 1/1. The protein operates within cofactor biosynthesis; adenosylcobalamin biosynthesis; sirohydrochlorin from precorrin-2: step 1/1. It participates in porphyrin-containing compound metabolism; siroheme biosynthesis; precorrin-2 from uroporphyrinogen III: step 1/1. Its pathway is porphyrin-containing compound metabolism; siroheme biosynthesis; siroheme from sirohydrochlorin: step 1/1. It functions in the pathway porphyrin-containing compound metabolism; siroheme biosynthesis; sirohydrochlorin from precorrin-2: step 1/1. Its function is as follows. Multifunctional enzyme that catalyzes the SAM-dependent methylations of uroporphyrinogen III at position C-2 and C-7 to form precorrin-2 via precorrin-1. Then it catalyzes the NAD-dependent ring dehydrogenation of precorrin-2 to yield sirohydrochlorin. Finally, it catalyzes the ferrochelation of sirohydrochlorin to yield siroheme. The sequence is that of Siroheme synthase from Escherichia coli O81 (strain ED1a).